A 191-amino-acid chain; its full sequence is Cell division protein SepF (191 aa).

Residues Thr150 to Thr164 are compositionally biased toward low complexity. Residues Thr150–Ser191 are disordered. A compositionally biased stretch (polar residues) spans Glu165–Pro178.

Belongs to the SepF family. In terms of assembly, homodimer. Interacts with FtsZ.

It is found in the cytoplasm. In terms of biological role, cell division protein that is part of the divisome complex and is recruited early to the Z-ring. Probably stimulates Z-ring formation, perhaps through the cross-linking of FtsZ protofilaments. Its function overlaps with FtsA. The sequence is that of Cell division protein SepF from Prochlorococcus marinus (strain AS9601).